Here is a 156-residue protein sequence, read N- to C-terminus: Small ribosomal subunit protein uS7 (156 aa).

The protein belongs to the universal ribosomal protein uS7 family. Part of the 30S ribosomal subunit. Contacts proteins S9 and S11.

Its function is as follows. One of the primary rRNA binding proteins, it binds directly to 16S rRNA where it nucleates assembly of the head domain of the 30S subunit. Is located at the subunit interface close to the decoding center, probably blocks exit of the E-site tRNA. This chain is Small ribosomal subunit protein uS7, found in Acinetobacter baylyi (strain ATCC 33305 / BD413 / ADP1).